Reading from the N-terminus, the 269-residue chain is MTYFLNSDFSKLPLCESIIEVSRAIRQDFPSKRVIEDLKHKVEVARNYVVSENLPFLKLRKLIKLFYKNWKFECASGIYKLSDVLWLDHVLKTHKGTAVSLGIIILHIAQQLNLPLMPVIFPTQLILRADNGNGNMWLINPFNGDTLNKHVLKVWLKGNISPTAELYNNYLNKVQYFEVVRKMLDILKSALMEERNLELALNVSNVLLKIDPKNPYEIRDRGLIYSQLECDHVALTDLIYFVEHCPDDPISEILKIQIHSMEKKVITLH.

It belongs to the UPF0162 family.

The protein is UPF0162 protein bbp_163 of Buchnera aphidicola subsp. Baizongia pistaciae (strain Bp).